We begin with the raw amino-acid sequence, 127 residues long: C-C motif chemokine 28 (127 aa).

Residues methionine 1–alanine 19 form the signal peptide. Intrachain disulfides connect cysteine 30–cysteine 58 and cysteine 31–cysteine 73. Asparagine 78 is a glycosylation site (N-linked (GlcNAc...) asparagine). Basic residues predominate over residues lysine 92–glutamine 115. The disordered stretch occupies residues lysine 92–tyrosine 127. Over residues glycine 116–tyrosine 127 the composition is skewed to basic and acidic residues.

This sequence belongs to the intercrine beta (chemokine CC) family. As to expression, preferentially expressed by epithelial cells of diverse tissues including normal and pathological colon, salivary gland, mammary gland, trachea and rectum. Also found in prostate, spleen, thyroid, psoriasis skin and in lower levels in peripheral blood leukocytes, small intestine, Peyer patches, stomach and normal skin.

The protein resides in the secreted. Functionally, chemotactic activity for resting CD4, CD8 T-cells and eosinophils. Binds to CCR3 and CCR10 and induces calcium mobilization in a dose-dependent manner. This Homo sapiens (Human) protein is C-C motif chemokine 28 (CCL28).